The chain runs to 490 residues: Betaine aldehyde dehydrogenase (490 aa).

N93 contacts K(+). 150 to 152 (GAW) is an NAD(+) binding site. The active-site Charge relay system is the K162. 176 to 179 (KPSE) serves as a coordination point for NAD(+). V180 is a binding site for K(+). Position 230–233 (230–233 (GTAT)) interacts with NAD(+). L246 provides a ligand contact to K(+). Residue E252 is the Proton acceptor of the active site. Residues G254, C286, and E387 each coordinate NAD(+). C286 serves as the catalytic Nucleophile. C286 bears the Cysteine sulfenic acid (-SOH) mark. K(+) contacts are provided by K457 and G460. E464 acts as the Charge relay system in catalysis.

This sequence belongs to the aldehyde dehydrogenase family. Dimer of dimers. Requires K(+) as cofactor.

The catalysed reaction is betaine aldehyde + NAD(+) + H2O = glycine betaine + NADH + 2 H(+). Its pathway is amine and polyamine biosynthesis; betaine biosynthesis via choline pathway; betaine from betaine aldehyde: step 1/1. In terms of biological role, involved in the biosynthesis of the osmoprotectant glycine betaine. Catalyzes the irreversible oxidation of betaine aldehyde to the corresponding acid. This Xanthomonas campestris pv. campestris (strain ATCC 33913 / DSM 3586 / NCPPB 528 / LMG 568 / P 25) protein is Betaine aldehyde dehydrogenase.